A 20-amino-acid chain; its full sequence is KDGYLVGSDGCKYSCLTRPG.

The LCN-type CS-alpha/beta domain occupies 1 to 20; the sequence is KDGYLVGSDGCKYSCLTRPG.

Expressed by the venom gland.

The protein resides in the secreted. Its function is as follows. Beta toxins bind voltage-independently at site-4 of sodium channels (Nav) and shift the voltage of activation toward more negative potentials thereby affecting sodium channel activation and promoting spontaneous and repetitive firing. The sequence is that of Putative beta-neurotoxin from Tityus pachyurus (Colombian scorpion).